A 527-amino-acid polypeptide reads, in one-letter code: TnpB-like protein R854 (527 aa).

Residues 21–36 (GSKTKKKVFVKKKPPA) are compositionally biased toward basic residues. The segment at 21–50 (GSKTKKKVFVKKKPPAKKPPDKKPLKKTTK) is disordered. Zn(2+)-binding residues include Cys481, Cys484, Cys498, and Cys501.

In the central section; belongs to the transposase 2 family. This sequence in the C-terminal section; belongs to the transposase 35 family.

This chain is TnpB-like protein R854, found in Acanthamoeba polyphaga mimivirus (APMV).